Here is a 225-residue protein sequence, read N- to C-terminus: C-reactive protein (225 aa).

The signal sequence occupies residues 1–20; the sequence is MEKLLWCFLTLVSFSNMSDQ. Residues 24–225 form the Pentraxin (PTX) domain; it reads HKKAFVFPKE…EVHVKPQLWP (202 aa). Cysteines 55 and 116 form a disulfide. The Ca(2+) site is built by Asn-80, Gln-158, Asp-159, and Gln-169.

This sequence belongs to the pentraxin family. In terms of assembly, homopentamer. Pentraxin (or pentaxin) have a discoid arrangement of 5 non-covalently bound subunits. Interacts with FCN1; may regulate monocyte activation by FCN1. Ca(2+) is required as a cofactor. Found in plasma.

The protein localises to the secreted. In terms of biological role, displays several functions associated with host defense: it promotes agglutination, bacterial capsular swelling, phagocytosis and complement fixation through its calcium-dependent binding to phosphorylcholine. Can interact with DNA and histones and may scavenge nuclear material released from damaged circulating cells. The chain is C-reactive protein (CRP) from Oryctolagus cuniculus (Rabbit).